A 199-amino-acid polypeptide reads, in one-letter code: RNA-free ribonuclease P (199 aa).

Belongs to the HARP family.

It carries out the reaction Endonucleolytic cleavage of RNA, removing 5'-extranucleotides from tRNA precursor.. Functionally, RNA-free RNase P that catalyzes the removal of the 5'-leader sequence from pre-tRNA to produce the mature 5'-terminus. The polypeptide is RNA-free ribonuclease P (Thermococcus onnurineus (strain NA1)).